Consider the following 141-residue polypeptide: Large ribosomal subunit protein uL16 (141 aa).

A disordered region spans residues 1-20; sequence MLMPKRTKYRKQQKGRNRGK.

This sequence belongs to the universal ribosomal protein uL16 family. As to quaternary structure, part of the 50S ribosomal subunit.

Binds 23S rRNA and is also seen to make contacts with the A and possibly P site tRNAs. The chain is Large ribosomal subunit protein uL16 from Nautilia profundicola (strain ATCC BAA-1463 / DSM 18972 / AmH).